Reading from the N-terminus, the 322-residue chain is Nuclease 1, mitochondrial (322 aa).

Histidine 142 functions as the Proton acceptor in the catalytic mechanism. Asparagine 174 serves as a coordination point for Mg(2+).

Belongs to the DNA/RNA non-specific endonuclease family. In terms of assembly, homodimer. Requires Mn(2+) as cofactor. The cofactor is Mg(2+).

It localises to the mitochondrion inner membrane. This enzyme has both RNase and DNase activity. It degrades single-stranded DNA and RNA. The polypeptide is Nuclease 1, mitochondrial (pnu1) (Schizosaccharomyces pombe (strain 972 / ATCC 24843) (Fission yeast)).